The primary structure comprises 399 residues: Stomatin-like protein 1 (399 aa).

The short motif at 6–10 (GYRAL) is the Tyrosine-type lysosomal sorting signal element. Residue Ser-28 is modified to Phosphoserine. Residues 58-78 (LVSVLGFLLLLLTFPISGWFA) form a helical; Signal-anchor for type III membrane protein membrane-spanning segment. Over 79-399 (LKIVPTYERM…KLEAVLKALK (321 aa)) the chain is Cytoplasmic. In terms of domain architecture, SCP2 spans 288-399 (KQPVAEGLLT…KLEAVLKALK (112 aa)).

This sequence belongs to the band 7/mec-2 family. In terms of assembly, interacts with STOM; may redistribute STOM from the plasma membrane to late endosomes. As to expression, expressed in dorsal root ganglion neurons.

The protein resides in the membrane. It localises to the cytoplasmic vesicle. It is found in the cell membrane. Its subcellular location is the late endosome membrane. The protein localises to the membrane raft. In terms of biological role, may play a role in cholesterol transfer to late endosomes. May play a role in modulating membrane acid-sensing ion channels. Can specifically inhibit proton-gated current of ASIC1 isoform 1. Can increase inactivation speed of ASIC3. May be involved in regulation of proton sensing in dorsal root ganglions. The sequence is that of Stomatin-like protein 1 (Stoml1) from Mus musculus (Mouse).